A 330-amino-acid polypeptide reads, in one-letter code: Exostosin-like 2 (330 aa).

Over 1–22 (MRCCHICKLPGRVMGIRVLRLS) the chain is Cytoplasmic. The chain crosses the membrane as a helical; Signal-anchor for type II membrane protein span at residues 23–43 (LVVILVLLLVAGALTALLPSV). Residues 44 to 330 (KEDKMLMLRR…FPYANYKRKI (287 aa)) are Lumenal-facing. Gln71 provides a ligand contact to UDP-N-acetyl-alpha-D-galactosamine. A UDP-N-acetyl-alpha-D-glucosamine-binding site is contributed by Gln71. An N-linked (GlcNAc...) asparagine glycan is attached at Asn74. UDP-N-acetyl-alpha-D-galactosamine-binding residues include Arg75, Asn100, Asn129, Arg134, Asp150, Asp151, Asp152, and Asp244. Positions 75, 100, 129, 134, 150, 151, 152, 244, 245, and 293 each coordinate UDP-N-acetyl-alpha-D-glucosamine. Asp152 is a Mn(2+) binding site. Cysteines 243 and 296 form a disulfide. Residue Asp245 is part of the active site. Arg293 provides a ligand contact to UDP-N-acetyl-alpha-D-galactosamine.

Belongs to the glycosyltransferase 47 family. The cofactor is Mn(2+). Post-translationally, the soluble form derives from the membrane form by proteolytic processing. As to expression, ubiquitous.

The protein localises to the endoplasmic reticulum membrane. It localises to the secreted. It catalyses the reaction 3-O-(beta-D-GlcA-(1-&gt;3)-beta-D-Gal-(1-&gt;3)-beta-D-Gal-(1-&gt;4)-beta-D-Xyl)-L-seryl-[protein] + UDP-N-acetyl-alpha-D-glucosamine = 3-O-(alpha-D-GlcNAc-(1-&gt;4)-beta-D-GlcA-(1-&gt;3)-beta-D-Gal-(1-&gt;3)-beta-D-Gal-(1-&gt;4)-beta-D-Xyl)-L-seryl-[protein] + UDP + H(+). The protein operates within glycan metabolism; heparan sulfate biosynthesis. In terms of biological role, glycosyltransferase required for the biosynthesis of heparan-sulfate and responsible for the alternating addition of beta-1-4-linked glucuronic acid (GlcA) and alpha-1-4-linked N-acetylglucosamine (GlcNAc) units to nascent heparan sulfate chains. The sequence is that of Exostosin-like 2 (EXTL2) from Homo sapiens (Human).